A 251-amino-acid chain; its full sequence is Hydroxyacylglutathione hydrolase (251 aa).

Zn(2+)-binding residues include His-53, His-55, Asp-57, His-58, His-110, Asp-127, and His-165.

It belongs to the metallo-beta-lactamase superfamily. Glyoxalase II family. In terms of assembly, monomer. The cofactor is Zn(2+).

The enzyme catalyses an S-(2-hydroxyacyl)glutathione + H2O = a 2-hydroxy carboxylate + glutathione + H(+). The protein operates within secondary metabolite metabolism; methylglyoxal degradation; (R)-lactate from methylglyoxal: step 2/2. Functionally, thiolesterase that catalyzes the hydrolysis of S-D-lactoyl-glutathione to form glutathione and D-lactic acid. The chain is Hydroxyacylglutathione hydrolase from Escherichia coli (strain SMS-3-5 / SECEC).